A 136-amino-acid chain; its full sequence is Prefoldin subunit alpha (136 aa).

The protein belongs to the prefoldin subunit alpha family. As to quaternary structure, heterohexamer of two alpha and four beta subunits.

The protein resides in the cytoplasm. Molecular chaperone capable of stabilizing a range of proteins. Seems to fulfill an ATP-independent, HSP70-like function in archaeal de novo protein folding. This Pyrobaculum arsenaticum (strain DSM 13514 / JCM 11321 / PZ6) protein is Prefoldin subunit alpha.